A 516-amino-acid chain; its full sequence is Endo-acting ulvan lyase (516 aa).

The N-terminal stretch at 1 to 24 (MLEKTTLKNIILIHFLMFLAVVTA) is a signal peptide. Cysteines 38 and 65 form a disulfide. The Ca(2+) site is built by Gly-42, Asn-44, Asp-62, Ser-64, Ala-67, and Asn-68. Tyr-138 provides a ligand contact to substrate. The Proton acceptor role is filled by Lys-143. Residues 191–195 (EGDGR) and 260–263 (YRVK) contribute to the substrate site. The active-site Proton donor/acceptor is the Tyr-260. The tract at residues 289–429 (PIGDVYKLKN…VWKAIAVESL (141 aa)) is ulvan-binding domain. Positions 430 to 516 (SVDENAILAS…NKYHKKLIVK (87 aa)) are cleaved as a propeptide — removed by the type IX secretion system (T9SS).

This sequence belongs to the polysaccharide lyase 28 family. The cofactor is Ca(2+).

Its subcellular location is the secreted. Ulvan lyase involved in ulvan degradation. Ulvan is the main polysaccharide component of the Ulvales (green seaweed) cell wall. It is composed of disaccharide building blocks comprising 3-sulfated rhamnose (Rha3S) linked to D-glucuronic acid (GlcA), L-iduronic acid (IduA), or D-xylose (Xyl). Ulvan lyase catalyzes the endolytic cleavage of the glycosidic bond between Rha3S and the uronic acids GlcA or IduA, producing oligosaccharides that have unsaturated 4-deoxy-L-threo-hex-4-enopyranosiduronic acid (deltaUA) at the non-reducing end. This results eventually in the degradation of the ulvan polysaccharide into deltaUA-Rha3S disaccharides and deltaUA-Rha3S-Xyl-Rha3S tetrasaccharides. The protein is Endo-acting ulvan lyase of Formosa agariphila (strain DSM 15362 / KCTC 12365 / LMG 23005 / KMM 3901 / M-2Alg 35-1).